We begin with the raw amino-acid sequence, 236 residues long: Phosphoglycolate phosphatase (236 aa).

The active-site Nucleophile is D23. 2 residues coordinate Mg(2+): D23 and D25. K162 serves as a coordination point for substrate. The Mg(2+) site is built by D185 and D189.

It belongs to the archaeal SPP-like hydrolase family. It depends on Mg(2+) as a cofactor.

It catalyses the reaction 2-phosphoglycolate + H2O = glycolate + phosphate. In terms of biological role, catalyzes the dephosphorylation of 2-phosphoglycolate. The protein is Phosphoglycolate phosphatase of Picrophilus torridus (strain ATCC 700027 / DSM 9790 / JCM 10055 / NBRC 100828 / KAW 2/3).